The primary structure comprises 156 residues: Transcriptional regulator MraZ (156 aa).

SpoVT-AbrB domains are found at residues threonine 5–leucine 51 and methionine 80–alanine 123.

Belongs to the MraZ family. Forms oligomers.

The protein resides in the cytoplasm. It localises to the nucleoid. In Caulobacter vibrioides (strain ATCC 19089 / CIP 103742 / CB 15) (Caulobacter crescentus), this protein is Transcriptional regulator MraZ.